A 354-amino-acid chain; its full sequence is Uroporphyrinogen decarboxylase (354 aa).

Substrate is bound by residues 27–31 (RQAGR), Asp-77, Tyr-154, Ser-209, and His-327.

The protein belongs to the uroporphyrinogen decarboxylase family. As to quaternary structure, homodimer.

Its subcellular location is the cytoplasm. It carries out the reaction uroporphyrinogen III + 4 H(+) = coproporphyrinogen III + 4 CO2. It functions in the pathway porphyrin-containing compound metabolism; protoporphyrin-IX biosynthesis; coproporphyrinogen-III from 5-aminolevulinate: step 4/4. Its function is as follows. Catalyzes the decarboxylation of four acetate groups of uroporphyrinogen-III to yield coproporphyrinogen-III. The protein is Uroporphyrinogen decarboxylase of Pseudomonas syringae pv. syringae (strain B728a).